A 35-amino-acid polypeptide reads, in one-letter code: GGCRYFLGGCSEHSDCCEHLRCKMGLNYCAWDGTF.

Intrachain disulfides connect C3–C17, C10–C22, and C16–C29. F35 carries the phenylalanine amide modification.

The protein belongs to the neurotoxin 10 (Hwtx-1) family. 62 (Vatx) subfamily. Expressed by the venom gland.

Its subcellular location is the secreted. In terms of biological role, gating-modifier toxin with weak activity on Nav1.7/SCN9A and Nav1.8/SCN10A. Inhibits Nav1.7/SCN9A peak current (IC(50)=334 nM) and shifts the voltage dependence of activation to more depolarised membrane potentials. Shows 21% peak current inhibition (at 10 uM) on Nav1.8/SCN10A sodium channels. The polypeptide is Mu-theraphotoxin-Pm1a (Poecilotheria metallica (Metallic blue ornamental tree spider)).